The primary structure comprises 72 residues: ATP synthase subunit L (72 aa).

In terms of assembly, F-type ATP synthases have 2 components, the catalytic core F(1) and the membrane-embedded component F(0), linked together by a central stalk and a peripheral stalk. The central stalk, also called rotor shaft, is often seen as part of F(1). The peripheral stalk is seen as part of F(0). F(0) contains the membrane channel next to the rotor. F-type ATP synthases form dimers but each monomer functions independently in ATP generation. The dimer consists of 18 different polypeptides: ATP1 (subunit alpha, part of F(1), 3 molecules per monomer), ATP2 (subunit beta, part of F(1), 3 molecules per monomer), ATP3 (subunit gamma, part of the central stalk), ATP4 (subunit b, part of the peripheral stalk), ATP5/OSCP (subunit 5/OSCP, part of the peripheral stalk), ATP6 (subunit a, part of the peripheral stalk), ATP7 (subunit d, part of the peripheral stalk), ATP8 (subunit 8, part of the peripheral stalk), OLI1 (subunit c, part of the rotor, 10 molecules per monomer), ATP14 (subunit h, part of the peripheral stalk), ATP15 (subunit epsilon, part of the central stalk), ATP16 (subunit delta, part of the central stalk), ATP17 (subunit f, part of the peripheral stalk), ATP18 (subunit i/j, part of the peripheral stalk). Dimer-specific subunits are ATP19 (subunit k, at interface between monomers), ATP20 (subunit g, at interface between monomers), TIM11 (subunit e, at interface between monomers). Also contains subunit L.

It localises to the mitochondrion inner membrane. In terms of biological role, mitochondrial membrane ATP synthase (F(1)F(0) ATP synthase or Complex V) produces ATP from ADP in the presence of a proton gradient across the membrane which is generated by electron transport complexes of the respiratory chain. F-type ATP synthases consist of two structural domains, F(1) - containing the extramembraneous catalytic core, and F(0) - containing the membrane proton channel, linked together by a central stalk and a peripheral stalk. During catalysis, ATP synthesis in the catalytic domain of F(1) is coupled via a rotary mechanism of the central stalk subunits to proton translocation. The protein is ATP synthase subunit L of Pichia angusta (Yeast).